The primary structure comprises 399 residues: Sperm equatorial segment protein 1 (399 aa).

The first 18 residues, 1–18 (MKLVVLVALWLWPSSLLA), serve as a signal peptide directing secretion. N128 carries an N-linked (GlcNAc...) asparagine glycan. Over residues 136 to 145 (EEPFIEKEPE) the composition is skewed to basic and acidic residues. The tract at residues 136 to 250 (EEPFIEKEPE…PSAEDLPGRH (115 aa)) is disordered. Residues 157-167 (PEPELEPEPEP) show a composition bias toward acidic residues. Residues 182-206 (VTSTTPNKELTGTSRISSMATQPAN) are compositionally biased toward polar residues. Over residues 207-225 (TQATRITVTVKTTSTMDVS) the composition is skewed to low complexity.

It belongs to the SPESP1 family. Glycosylated. In testis there are two predominant forms of 77- and 67-kDa and a form of 47-kDa, whereas in epididymal sperm from caput, corpus, and cauda there are two forms of 47- and 43-kDa. Testis forms contain complex carbohydrate residues. Epididymal sperm forms are N-glycosylated. Then undergoes significant glycosylation in the testis and that the majority of these glycoconjugates are removed by the time sperm reach the caput epididymis. As to expression, testis specific.

The protein resides in the cytoplasmic vesicle. It is found in the secretory vesicle. Its subcellular location is the acrosome. Involved in fertilization ability of sperm. The protein is Sperm equatorial segment protein 1 of Mus musculus (Mouse).